A 295-amino-acid polypeptide reads, in one-letter code: Glycine N-phenylacetyltransferase (295 aa).

N6-acetyllysine is present on Lys-43. Lys-48 is subject to N6-acetyllysine; alternate. Lys-48 carries the post-translational modification N6-succinyllysine; alternate. Lys-80 bears the N6-acetyllysine mark. The residue at position 182 (Lys-182) is an N6-acetyllysine; alternate. Residue Lys-182 is modified to N6-succinyllysine; alternate.

It belongs to the glycine N-acyltransferase family.

Its subcellular location is the mitochondrion. It carries out the reaction phenylacetyl-CoA + glycine = phenylacetylglycine + CoA + H(+). Its function is as follows. Mitochondrial acyltransferase which transfers the acyl group to the N-terminus of glycine. Can conjugate a multitude of substrates to form a variety of N-acylglycines. Catalyzes the conjugation of arylacetic acids with glycine but does not have activity towards any alkyl-CoA. The chain is Glycine N-phenylacetyltransferase from Bos taurus (Bovine).